A 307-amino-acid polypeptide reads, in one-letter code: NmrA-like family domain-containing oxidoreductase flvB (307 aa).

Residues 4-9 (LITGAT), 32-36 (SSSSP), 53-54 (DY), 74-76 (STN), and 148-151 (YVEG) contribute to the NADP(+) site.

The protein belongs to the NmrA-type oxidoreductase family.

The enzyme catalyses (2S)-5,5-dimethyl-2,3,4,5-tetrahydropyridine-2,6-dicarboxylate + NADPH + 2 H(+) = (6S)-3,3-dimethylpiperidine-2,6-dicarboxylate + NADP(+). It carries out the reaction (2S)-5,5-dimethyl-2,3,4,5-tetrahydropyridine-2,6-dicarboxylate + NADH + 2 H(+) = (6S)-3,3-dimethylpiperidine-2,6-dicarboxylate + NAD(+). It functions in the pathway secondary metabolite biosynthesis; terpenoid biosynthesis. Its function is as follows. NmrA-like family domain-containing oxidoreductase; part of the gene cluster that mediates the biosynthesis of flavunoidine, an alkaloidal terpenoid with a tetracyclic cage-like core connected to dimethylcadaverine via a C-N bond and acylated with 5,5-dimethyl-L-pipecolate. The tetracyclic core is synthesized by the terpene cyclase flvE and the cytochrome P450 monooxygenase flvD. The terpene cyclase flvE catalyzes the cyclization of farnesyl pyrophosphate (FPP) to form (1R,4R,5S)-(+)-acoradiene and the cytochrome P450 monooxygenase flvD is then responsible for oxidative conversion of (1R,4R,5S)-(+)-acoradiene into the tetracyclic cage present in the final product flavunoidine. In parallel, the N-methyltransferase flvH dimethylates L-lysine to give N,N-dimethyl-L-Lysin which is decarboxylated by flvG to afford dimethylcadaverine. The terpene cyclase-like protein flvF is the enzyme that attaches the dimethylcadaverine precusor at the C-7 of the tetracyclic cage to yield pre-flavunoidine. The cytochrome monooxygenase flvC hydroxylates the C-10 position of pre-flavunoidine whereas the NRPS flvI acylates the terpenoid core at the hydroxylated C-10 with dimethylpipecolate to yield final flavunoidine. The bifunctional enzyme flvA and the dehydrogenase flvB are responsible for the synthesis of the dimethylpipecolate precursor. The PLP-dependent lyase domain of flvA might use L-O-acetyl-homoserine and alpha-keto-isovalerate to form an intermediary ketone that can cyclize intramolecularly to yield an imine. The imine can be reduced by flvB to yield the 6-carboxylated pipecolate. The C-terminal alpha-KG-dependent oxygenase domain of flvA is then proposed to catalyze the decarboxylation to yield dimethylpipecolate. The sequence is that of NmrA-like family domain-containing oxidoreductase flvB from Aspergillus flavus (strain ATCC 200026 / FGSC A1120 / IAM 13836 / NRRL 3357 / JCM 12722 / SRRC 167).